The sequence spans 377 residues: Putative glutamate--cysteine ligase 2 (377 aa).

It belongs to the glutamate--cysteine ligase type 2 family. YbdK subfamily.

The enzyme catalyses L-cysteine + L-glutamate + ATP = gamma-L-glutamyl-L-cysteine + ADP + phosphate + H(+). Its function is as follows. ATP-dependent carboxylate-amine ligase which exhibits weak glutamate--cysteine ligase activity. The sequence is that of Putative glutamate--cysteine ligase 2 from Pseudomonas aeruginosa (strain LESB58).